A 146-amino-acid polypeptide reads, in one-letter code: Hemoglobin subunit beta (146 aa).

Position 1 is an N-acetylvaline (Val1). The Globin domain maps to 2 to 146 (HLTADEKVSL…VANALAHKYH (145 aa)). At Ser44 the chain carries Phosphoserine. An N6-acetyllysine modification is found at Lys59. His63 contributes to the heme b binding site. Lys82 bears the N6-acetyllysine mark. His92 contacts heme b. At Cys93 the chain carries S-nitrosocysteine. Residue Lys144 is modified to N6-acetyllysine.

Belongs to the globin family. Heterotetramer of two alpha chains and two beta chains. In terms of tissue distribution, red blood cells.

Functionally, involved in oxygen transport from the lung to the various peripheral tissues. This Tamias striatus (Eastern chipmunk) protein is Hemoglobin subunit beta.